The sequence spans 71 residues: Protein PSY3 (71 aa).

Residues 1–25 form the signal peptide; that stretch reads MGYSSSSRIGLCLFLFFTFALLSSA. The propeptide occupies 26-49; the sequence is RISLSFSENEMTVVPERSLMVSTN. The interval 47 to 71 is disordered; that stretch reads STNDYSDPTANGRHDPPRGGRGRRR. The residue at position 51 (Tyr51) is a Sulfotyrosine. Pro63 is modified (4-hydroxyproline). O-linked (Ara...) hydroxyproline glycosylation is present at Pro63. A propeptide spanning residues 66–71 is cleaved from the precursor; it reads GRGRRR.

This sequence belongs to the sulfated-peptide plant hormone family. The sulfation and the glycosylation are required for full activity.

It localises to the secreted. Functionally, promotes cellular proliferation and expansion. In Arabidopsis thaliana (Mouse-ear cress), this protein is Protein PSY3 (PSY3).